Here is a 324-residue protein sequence, read N- to C-terminus: 4-hydroxybenzoyl-CoA reductase subunit beta (324 aa).

The 216-residue stretch at 2-217 (NILTDFRTHR…AAIEVPPTGA (216 aa)) folds into the FAD-binding PCMH-type domain. Residues 29–36 (PLGAGTDL), Thr-111, Asn-115, and Gln-118 contribute to the FAD site. The [4Fe-4S] cluster site is built by Cys-122, Cys-138, Cys-146, and Cys-155. FAD-binding residues include Asp-162 and Lys-224.

In terms of assembly, heterohexamer of two alpha, two beta and two gamma subunits. It depends on FAD as a cofactor. The cofactor is [4Fe-4S] cluster.

The catalysed reaction is oxidized 2[4Fe-4S]-[ferredoxin] + benzoyl-CoA + H2O = 4-hydroxybenzoyl-CoA + reduced 2[4Fe-4S]-[ferredoxin] + 2 H(+). With respect to regulation, inactivated by low concentrations of cyanide in vitro. Its function is as follows. Component of a complex that catalyzes the reductive dehydroxylation of 4-hydroxybenzoyl-CoA to benzoyl-CoA. Reaction is not reversible. Is a key enzyme in the anaerobic degradation of phenolic compounds. The polypeptide is 4-hydroxybenzoyl-CoA reductase subunit beta (hcrB) (Thauera aromatica).